A 472-amino-acid polypeptide reads, in one-letter code: Serine incorporator 3 (472 aa).

Residues 1-95 (MGAVLGVFSL…KECDVLVRYK (95 aa)) are Extracellular-facing. N-linked (GlcNAc...) asparagine glycosylation is present at Asn-34. A helical membrane pass occupies residues 96–116 (AVYRISFALAVFFFAFSLLML). At 117 to 131 (NVKTSKDPRAAIHNG) the chain is on the cytoplasmic side. The helical transmembrane segment at 132–152 (FWFFKIAAIVGVMVGSFYIPG) threads the bilayer. At 153–158 (GHFNTA) the chain is on the extracellular side. Residues 159-179 (WFVIGMVGAAFFILIQLVLLV) traverse the membrane as a helical segment. The Cytoplasmic portion of the chain corresponds to 180–202 (DFAHSWNESWVNRMEEGNPKCWY). The helical transmembrane segment at 203 to 223 (AALLSVTSLFYILSIIFAGLL) threads the bilayer. Over 224 to 238 (YTYYTKPDGCTENKF) the chain is Extracellular. Residues 239 to 259 (FISFNLILCVVISVLSIHPKI) traverse the membrane as a helical segment. Over 260–328 (QEHQPRSGLL…APTPAVPLQS (69 aa)) the chain is Cytoplasmic. The chain crosses the membrane as a helical span at residues 329 to 349 (GPSLNKENFIGLLVFVLSLSY). Topologically, residues 350-405 (SSIRNSSNSQVSKLTLSGSDSVILRDTAANGASDEEDGRPRRAVDNEREGVQYNYS) are extracellular. N-linked (GlcNAc...) asparagine glycosylation is present at Asn-354. The residue at position 370 (Ser-370) is a Phosphoserine. The N-linked (GlcNAc...) asparagine glycan is linked to Asn-403. The chain crosses the membrane as a helical span at residues 406–426 (MFHLMLCSASLYIMMTLTNWY). Topologically, residues 427-445 (SPDANFQSMTSKWPAVWVK) are cytoplasmic. A helical transmembrane segment spans residues 446-466 (ISSSWVCLLLYVWTLVAPLVL). At 467-472 (TNRDFS) the chain is on the extracellular side.

Belongs to the TDE1 family. Post-translationally, N-glycosylated.

It localises to the cell membrane. Its subcellular location is the golgi apparatus membrane. The enzyme catalyses a 1,2-diacyl-sn-glycero-3-phospho-L-serine(in) = a 1,2-diacyl-sn-glycero-3-phospho-L-serine(out). It carries out the reaction a 1,2-diacyl-sn-glycero-3-phosphocholine(in) = a 1,2-diacyl-sn-glycero-3-phosphocholine(out). The catalysed reaction is a 1,2-diacyl-sn-glycero-3-phosphoethanolamine(in) = a 1,2-diacyl-sn-glycero-3-phosphoethanolamine(out). Its function is as follows. Restriction factor required to restrict infectivity of gammaretroviruses: acts by inhibiting an early step of viral infection. Impairs the penetration of the viral particle into the cytoplasm. Non-ATP-dependent, non-specific lipid transporter for phosphatidylserine, phosphatidylcholine, and phosphatidylethanolamine. Functions as a scramblase that flips lipids in both directions across the membrane. Phospholipid scrambling results in gammaretroviral surface exposure of phosphatidylserine and loss of membrane asymmetry, which leads to loss of infectivity. This chain is Serine incorporator 3 (SERINC3), found in Bos taurus (Bovine).